The chain runs to 135 residues: Phosphomevalonate dehydratase small subunit (135 aa).

Serine 67 serves as the catalytic Proton acceptor.

This sequence belongs to the AcnX type II small subunit family. Heterodimer composed of a large subunit (PMDh-L) and a small subunit (PMDh-S).

It carries out the reaction (R)-5-phosphomevalonate = (2E)-3-methyl-5-phosphooxypent-2-enoate + H2O. It participates in isoprenoid biosynthesis; isopentenyl diphosphate biosynthesis via mevalonate pathway. Functionally, component of a hydro-lyase that catalyzes the dehydration of mevalonate 5-phosphate (MVA5P) to form trans-anhydromevalonate 5-phosphate (tAHMP). Involved in the archaeal mevalonate (MVA) pathway, which provides fundamental precursors for isoprenoid biosynthesis, such as isopentenyl diphosphate (IPP) and dimethylallyl diphosphate (DMAPP). The protein is Phosphomevalonate dehydratase small subunit of Methanopyrus kandleri (strain AV19 / DSM 6324 / JCM 9639 / NBRC 100938).